A 208-amino-acid polypeptide reads, in one-letter code: Small ribosomal subunit protein uS4 (208 aa).

Residues 98–159 (RRLDNVVYRL…KSRNVAAISE (62 aa)) enclose the S4 RNA-binding domain.

Belongs to the universal ribosomal protein uS4 family. In terms of assembly, part of the 30S ribosomal subunit. Contacts protein S5. The interaction surface between S4 and S5 is involved in control of translational fidelity.

In terms of biological role, one of the primary rRNA binding proteins, it binds directly to 16S rRNA where it nucleates assembly of the body of the 30S subunit. Its function is as follows. With S5 and S12 plays an important role in translational accuracy. This is Small ribosomal subunit protein uS4 from Trichlorobacter lovleyi (strain ATCC BAA-1151 / DSM 17278 / SZ) (Geobacter lovleyi).